The chain runs to 322 residues: Acetyl-coenzyme A carboxylase carboxyl transferase subunit alpha (322 aa).

One can recognise a CoA carboxyltransferase C-terminal domain in the interval 40–297 (PLQKKLGDLR…RETLTRNLEE (258 aa)).

Belongs to the AccA family. Acetyl-CoA carboxylase is a heterohexamer composed of biotin carboxyl carrier protein (AccB), biotin carboxylase (AccC) and two subunits each of ACCase subunit alpha (AccA) and ACCase subunit beta (AccD).

The protein resides in the cytoplasm. It catalyses the reaction N(6)-carboxybiotinyl-L-lysyl-[protein] + acetyl-CoA = N(6)-biotinyl-L-lysyl-[protein] + malonyl-CoA. It functions in the pathway lipid metabolism; malonyl-CoA biosynthesis; malonyl-CoA from acetyl-CoA: step 1/1. Its function is as follows. Component of the acetyl coenzyme A carboxylase (ACC) complex. First, biotin carboxylase catalyzes the carboxylation of biotin on its carrier protein (BCCP) and then the CO(2) group is transferred by the carboxyltransferase to acetyl-CoA to form malonyl-CoA. The chain is Acetyl-coenzyme A carboxylase carboxyl transferase subunit alpha from Gemmatimonas aurantiaca (strain DSM 14586 / JCM 11422 / NBRC 100505 / T-27).